Consider the following 303-residue polypeptide: Recombination-associated protein RdgC (303 aa).

This sequence belongs to the RdgC family.

The protein localises to the cytoplasm. It is found in the nucleoid. Functionally, may be involved in recombination. This Shewanella loihica (strain ATCC BAA-1088 / PV-4) protein is Recombination-associated protein RdgC.